The sequence spans 263 residues: Thiazole synthase (263 aa).

Catalysis depends on K100, which acts as the Schiff-base intermediate with DXP. Residues G161, 188–189 (AG), and 210–211 (NS) each bind 1-deoxy-D-xylulose 5-phosphate.

Belongs to the ThiG family. Homotetramer. Forms heterodimers with either ThiH or ThiS.

It localises to the cytoplasm. It carries out the reaction [ThiS sulfur-carrier protein]-C-terminal-Gly-aminoethanethioate + 2-iminoacetate + 1-deoxy-D-xylulose 5-phosphate = [ThiS sulfur-carrier protein]-C-terminal Gly-Gly + 2-[(2R,5Z)-2-carboxy-4-methylthiazol-5(2H)-ylidene]ethyl phosphate + 2 H2O + H(+). It functions in the pathway cofactor biosynthesis; thiamine diphosphate biosynthesis. In terms of biological role, catalyzes the rearrangement of 1-deoxy-D-xylulose 5-phosphate (DXP) to produce the thiazole phosphate moiety of thiamine. Sulfur is provided by the thiocarboxylate moiety of the carrier protein ThiS. In vitro, sulfur can be provided by H(2)S. The protein is Thiazole synthase of Pseudoalteromonas translucida (strain TAC 125).